Consider the following 196-residue polypeptide: Peptide deformylase (196 aa).

Residues cysteine 123 and histidine 166 each contribute to the Fe cation site. Residue glutamate 167 is part of the active site. Fe cation is bound at residue histidine 170.

The protein belongs to the polypeptide deformylase family. It depends on Fe(2+) as a cofactor.

The catalysed reaction is N-terminal N-formyl-L-methionyl-[peptide] + H2O = N-terminal L-methionyl-[peptide] + formate. Functionally, removes the formyl group from the N-terminal Met of newly synthesized proteins. Requires at least a dipeptide for an efficient rate of reaction. N-terminal L-methionine is a prerequisite for activity but the enzyme has broad specificity at other positions. This chain is Peptide deformylase, found in Lactococcus lactis subsp. lactis (strain IL1403) (Streptococcus lactis).